The primary structure comprises 447 residues: Tubulin beta chain (447 aa).

GTP contacts are provided by Gln-11, Glu-69, Ser-138, Gly-142, Thr-143, Gly-144, Asn-204, and Asn-226. Glu-69 contributes to the Mg(2+) binding site. The interval 424–447 (QYQEASVSEGEEEYDEEAPLEAEE) is disordered. The span at 432–447 (EGEEEYDEEAPLEAEE) shows a compositional bias: acidic residues.

The protein belongs to the tubulin family. In terms of assembly, dimer of alpha and beta chains. A typical microtubule is a hollow water-filled tube with an outer diameter of 25 nm and an inner diameter of 15 nM. Alpha-beta heterodimers associate head-to-tail to form protofilaments running lengthwise along the microtubule wall with the beta-tubulin subunit facing the microtubule plus end conferring a structural polarity. Microtubules usually have 13 protofilaments but different protofilament numbers can be found in some organisms and specialized cells. The cofactor is Mg(2+).

The protein resides in the cytoplasm. It is found in the cytoskeleton. Its function is as follows. Tubulin is the major constituent of microtubules, a cylinder consisting of laterally associated linear protofilaments composed of alpha- and beta-tubulin heterodimers. Microtubules grow by the addition of GTP-tubulin dimers to the microtubule end, where a stabilizing cap forms. Below the cap, tubulin dimers are in GDP-bound state, owing to GTPase activity of alpha-tubulin. The polypeptide is Tubulin beta chain (TUB1) (Cochliobolus heterostrophus (Southern corn leaf blight fungus)).